A 182-amino-acid polypeptide reads, in one-letter code: Large ribosomal subunit protein bL25 (182 aa).

It belongs to the bacterial ribosomal protein bL25 family. CTC subfamily. In terms of assembly, part of the 50S ribosomal subunit; part of the 5S rRNA/L5/L18/L25 subcomplex. Contacts the 5S rRNA. Binds to the 5S rRNA independently of L5 and L18.

Functionally, this is one of the proteins that binds to the 5S RNA in the ribosome where it forms part of the central protuberance. This Borrelia duttonii (strain Ly) protein is Large ribosomal subunit protein bL25.